We begin with the raw amino-acid sequence, 556 residues long: Calcium-dependent protein kinase 5 (556 aa).

The segment at 1–40 is disordered; it reads MGNSCRGSFKDKLDEGDNNKPEDYSKTSTTNLSSNSDHSP. Gly-2 carries the N-myristoyl glycine lipid modification. Residues 8 to 25 are compositionally biased toward basic and acidic residues; it reads SFKDKLDEGDNNKPEDYS. Low complexity predominate over residues 26–39; the sequence is KTSTTNLSSNSDHS. The region spanning 97–355 is the Protein kinase domain; the sequence is YTLSRKLGQG…AHEVLRHPWI (259 aa). Residues 103-111 and Lys-126 contribute to the ATP site; that span reads LGQGQFGTT. Residue Asp-221 is the Proton acceptor of the active site. Ser-261 bears the Phosphoserine mark. An autoinhibitory domain region spans residues 361–391; that stretch reads APDRALDPAVLSRLKQFSAMNKLKKMALKVI. 4 EF-hand domains span residues 398 to 433, 434 to 469, 470 to 505, and 509 to 539; these read EEIA…YGST, LKDT…LNKL, EREE…HGMA, and LEDI…GNAG. Ca(2+) contacts are provided by Asp-411, Asp-413, Ser-415, Glu-422, Asp-447, Asp-449, Ser-451, Thr-453, Glu-458, Asp-483, Asp-485, Ser-487, Glu-494, Asp-517, Asn-519, Asp-521, Lys-523, and Glu-528.

This sequence belongs to the protein kinase superfamily. Ser/Thr protein kinase family. CDPK subfamily.

Its subcellular location is the membrane. The catalysed reaction is L-seryl-[protein] + ATP = O-phospho-L-seryl-[protein] + ADP + H(+). It catalyses the reaction L-threonyl-[protein] + ATP = O-phospho-L-threonyl-[protein] + ADP + H(+). With respect to regulation, activated by calcium. Autophosphorylation may play an important role in the regulation of the kinase activity. May play a role in signal transduction pathways that involve calcium as a second messenger. The chain is Calcium-dependent protein kinase 5 (CPK5) from Arabidopsis thaliana (Mouse-ear cress).